Consider the following 515-residue polypeptide: Ribosome assembly protein 4 (515 aa).

The segment at 20-128 (REVAIIPKDL…LLYTPRAVFK (109 aa)) is interaction with MDN1. Residues 29 to 125 (LPNVSIKFQA…QITLLYTPRA (97 aa)) form a ubiquitin-like (UBL) domain region. WD repeat units lie at residues 141–181 (GHGS…PMHT), 184–223 (GHYN…CLGD), 227–273 (GHSK…CQYT), 276–314 (GHTN…RCIN), 352–396 (AQKK…KPIA), 400–439 (GHQK…FIST), 442–481 (GHVA…LSVD), and 484–515 (GHKD…LWTH).

It belongs to the NLE1/RSA4 family. Associates with the pre-60S ribosomal particle. Interacts (via WD repeats) with uL18 (RPL5). Interacts (via UBL domain) with MDN1 (via VWFA/MIDAS domain). Interacts (via WD repeats) with NSA2.

Its subcellular location is the nucleus. It localises to the nucleolus. Its function is as follows. Involved in ribosome biogenesis. Required for processing and efficient intra-nuclear transport of pre-60S ribosomal subunits. Interacts with the AAA-ATPase Midasin (MDN1/REA1), which is essential for the ATP-dependent dissociation of a group of nonribosomal factors from the pre-60S particle. In Saccharomyces cerevisiae (strain ATCC 204508 / S288c) (Baker's yeast), this protein is Ribosome assembly protein 4.